A 73-amino-acid chain; its full sequence is UPF0352 protein HSM_0097 (73 aa).

Belongs to the UPF0352 family.

This Histophilus somni (strain 2336) (Haemophilus somnus) protein is UPF0352 protein HSM_0097.